Here is a 466-residue protein sequence, read N- to C-terminus: Ribulose bisphosphate carboxylase large chain (466 aa).

At K5 the chain carries N6,N6,N6-trimethyllysine. Substrate-binding residues include N114 and T164. K166 acts as the Proton acceptor in catalysis. Residue K168 participates in substrate binding. K192, D194, and E195 together coordinate Mg(2+). Residue K192 is modified to N6-carboxylysine. Catalysis depends on H285, which acts as the Proton acceptor. Residues R286, H318, and S370 each coordinate substrate.

It belongs to the RuBisCO large chain family. Type I subfamily. In terms of assembly, heterohexadecamer of 8 large chains and 8 small chains; disulfide-linked. The disulfide link is formed within the large subunit homodimers. Requires Mg(2+) as cofactor. The disulfide bond which can form in the large chain dimeric partners within the hexadecamer appears to be associated with oxidative stress and protein turnover.

The protein resides in the plastid. It localises to the chloroplast. It catalyses the reaction 2 (2R)-3-phosphoglycerate + 2 H(+) = D-ribulose 1,5-bisphosphate + CO2 + H2O. The enzyme catalyses D-ribulose 1,5-bisphosphate + O2 = 2-phosphoglycolate + (2R)-3-phosphoglycerate + 2 H(+). Functionally, ruBisCO catalyzes two reactions: the carboxylation of D-ribulose 1,5-bisphosphate, the primary event in carbon dioxide fixation, as well as the oxidative fragmentation of the pentose substrate in the photorespiration process. Both reactions occur simultaneously and in competition at the same active site. This chain is Ribulose bisphosphate carboxylase large chain, found in Gonopterodendron arboreum (Maracaibo lignum-vitae).